We begin with the raw amino-acid sequence, 186 residues long: Ribosome-recycling factor (186 aa).

This sequence belongs to the RRF family.

It localises to the cytoplasm. In terms of biological role, responsible for the release of ribosomes from messenger RNA at the termination of protein biosynthesis. May increase the efficiency of translation by recycling ribosomes from one round of translation to another. The polypeptide is Ribosome-recycling factor (Burkholderia ambifaria (strain ATCC BAA-244 / DSM 16087 / CCUG 44356 / LMG 19182 / AMMD) (Burkholderia cepacia (strain AMMD))).